The chain runs to 327 residues: E3 ubiquitin ligase Rnf121 (327 aa).

Helical transmembrane passes span 50-70 (MHAE…LLLV), 79-96 (SYNM…VYFT), 99-119 (LHWW…AFVT), 148-168 (ATGI…NLLF), and 173-193 (EDAM…GVLG). The RING-type; atypical zinc finger occupies 226–276 (CAVCGQQIFVDVNEEGIIENTYRLSCNHVFHEFCIRGWCIVGKKQTCPYCK).

Belongs to the RNF121 family.

Its subcellular location is the endoplasmic reticulum membrane. The enzyme catalyses S-ubiquitinyl-[E2 ubiquitin-conjugating enzyme]-L-cysteine + [acceptor protein]-L-lysine = [E2 ubiquitin-conjugating enzyme]-L-cysteine + N(6)-ubiquitinyl-[acceptor protein]-L-lysine.. The protein operates within protein modification; protein ubiquitination. E3 ubiquitin ligase which accepts ubiquitin and transfers it to substrates thereby promoting their degradation by the endoplasmic reticulum-associated degradation (ERAD) pathway which is a pathway involved in ubiquitin-dependent degradation of misfolded endoplasmic reticulum proteins. May regulate the unfolded protein response to reduce endoplasmic reticulum stress. The sequence is that of E3 ubiquitin ligase Rnf121 (rnf121) from Xenopus tropicalis (Western clawed frog).